Here is a 567-residue protein sequence, read N- to C-terminus: Dihydroxy-acid dehydratase (567 aa).

[2Fe-2S] cluster is bound at residue Cys-52. Mg(2+) is bound at residue Asp-84. Cys-125 is a binding site for [2Fe-2S] cluster. Residues Asp-126 and Lys-127 each coordinate Mg(2+). An N6-carboxylysine modification is found at Lys-127. Cys-197 serves as a coordination point for [2Fe-2S] cluster. Glu-448 serves as a coordination point for Mg(2+). The active-site Proton acceptor is the Ser-474.

It belongs to the IlvD/Edd family. Homodimer. [2Fe-2S] cluster is required as a cofactor. Requires Mg(2+) as cofactor.

It carries out the reaction (2R)-2,3-dihydroxy-3-methylbutanoate = 3-methyl-2-oxobutanoate + H2O. The catalysed reaction is (2R,3R)-2,3-dihydroxy-3-methylpentanoate = (S)-3-methyl-2-oxopentanoate + H2O. The protein operates within amino-acid biosynthesis; L-isoleucine biosynthesis; L-isoleucine from 2-oxobutanoate: step 3/4. It functions in the pathway amino-acid biosynthesis; L-valine biosynthesis; L-valine from pyruvate: step 3/4. In terms of biological role, functions in the biosynthesis of branched-chain amino acids. Catalyzes the dehydration of (2R,3R)-2,3-dihydroxy-3-methylpentanoate (2,3-dihydroxy-3-methylvalerate) into 2-oxo-3-methylpentanoate (2-oxo-3-methylvalerate) and of (2R)-2,3-dihydroxy-3-methylbutanoate (2,3-dihydroxyisovalerate) into 2-oxo-3-methylbutanoate (2-oxoisovalerate), the penultimate precursor to L-isoleucine and L-valine, respectively. The protein is Dihydroxy-acid dehydratase of Streptococcus pneumoniae serotype 2 (strain D39 / NCTC 7466).